The chain runs to 342 residues: Anthranilate phosphoribosyltransferase (342 aa).

Residues Gly-81, 84-85 (GD), Thr-89, 91-94 (NIST), 109-117 (KHGNRALSS), and Thr-121 contribute to the 5-phospho-alpha-D-ribose 1-diphosphate site. Gly-81 provides a ligand contact to anthranilate. Position 93 (Ser-93) interacts with Mg(2+). Anthranilate is bound at residue Asn-112. Arg-167 provides a ligand contact to anthranilate. Mg(2+)-binding residues include Asp-225 and Glu-226.

Belongs to the anthranilate phosphoribosyltransferase family. In terms of assembly, homodimer. Mg(2+) is required as a cofactor.

The catalysed reaction is N-(5-phospho-beta-D-ribosyl)anthranilate + diphosphate = 5-phospho-alpha-D-ribose 1-diphosphate + anthranilate. It participates in amino-acid biosynthesis; L-tryptophan biosynthesis; L-tryptophan from chorismate: step 2/5. Catalyzes the transfer of the phosphoribosyl group of 5-phosphorylribose-1-pyrophosphate (PRPP) to anthranilate to yield N-(5'-phosphoribosyl)-anthranilate (PRA). This chain is Anthranilate phosphoribosyltransferase, found in Agrobacterium fabrum (strain C58 / ATCC 33970) (Agrobacterium tumefaciens (strain C58)).